Consider the following 309-residue polypeptide: HPr kinase/phosphorylase (309 aa).

Catalysis depends on residues histidine 138 and lysine 159. 153–160 (GKSGIGKS) serves as a coordination point for ATP. Position 160 (serine 160) interacts with Mg(2+). The active-site Proton acceptor; for phosphorylation activity. Proton donor; for dephosphorylation activity is aspartate 177. The important for the catalytic mechanism of both phosphorylation and dephosphorylation stretch occupies residues 201–210 (IEVRGIGILD). Residue glutamate 202 coordinates Mg(2+). Arginine 243 is a catalytic residue. The tract at residues 264 to 269 (PIKPAR) is important for the catalytic mechanism of dephosphorylation.

This sequence belongs to the HPrK/P family. Homohexamer. The cofactor is Mg(2+).

The catalysed reaction is [HPr protein]-L-serine + ATP = [HPr protein]-O-phospho-L-serine + ADP + H(+). It catalyses the reaction [HPr protein]-O-phospho-L-serine + phosphate + H(+) = [HPr protein]-L-serine + diphosphate. Functionally, catalyzes the ATP- as well as the pyrophosphate-dependent phosphorylation of a specific serine residue in HPr, a phosphocarrier protein of the phosphoenolpyruvate-dependent sugar phosphotransferase system (PTS). HprK/P also catalyzes the pyrophosphate-producing, inorganic phosphate-dependent dephosphorylation (phosphorolysis) of seryl-phosphorylated HPr (P-Ser-HPr). The two antagonistic activities of HprK/P are regulated by several intracellular metabolites, which change their concentration in response to the absence or presence of rapidly metabolisable carbon sources (glucose, fructose, etc.) in the growth medium. Therefore, by controlling the phosphorylation state of HPr, HPrK/P is a sensor enzyme that plays a major role in the regulation of carbon metabolism and sugar transport: it mediates carbon catabolite repression (CCR), and regulates PTS-catalyzed carbohydrate uptake and inducer exclusion. The chain is HPr kinase/phosphorylase from Alkaliphilus metalliredigens (strain QYMF).